The chain runs to 385 residues: uncharacterized protein (385 aa).

Residues Asp180, His258, and His275 each coordinate Zn(2+).

The protein belongs to the iron-containing alcohol dehydrogenase family. The cofactor is Zn(2+).

This is an uncharacterized protein from Synechocystis sp. (strain ATCC 27184 / PCC 6803 / Kazusa).